The sequence spans 155 residues: Small ribosomal subunit protein uS7 (155 aa).

The protein belongs to the universal ribosomal protein uS7 family. In terms of assembly, part of the 30S ribosomal subunit. Contacts proteins S9 and S11.

Its function is as follows. One of the primary rRNA binding proteins, it binds directly to 16S rRNA where it nucleates assembly of the head domain of the 30S subunit. Is located at the subunit interface close to the decoding center, probably blocks exit of the E-site tRNA. The sequence is that of Small ribosomal subunit protein uS7 from Chlorobium phaeovibrioides (strain DSM 265 / 1930) (Prosthecochloris vibrioformis (strain DSM 265)).